The sequence spans 238 residues: Probable rhamnogalacturonate lyase B (238 aa).

The N-terminal stretch at 1–19 (MRLRTSLGVASACASVASA) is a signal peptide. Asparagine 27, asparagine 110, and asparagine 143 each carry an N-linked (GlcNAc...) asparagine glycan.

Belongs to the polysaccharide lyase 4 family.

The protein localises to the secreted. It catalyses the reaction Endotype eliminative cleavage of L-alpha-rhamnopyranosyl-(1-&gt;4)-alpha-D-galactopyranosyluronic acid bonds of rhamnogalacturonan I domains in ramified hairy regions of pectin leaving L-rhamnopyranose at the reducing end and 4-deoxy-4,5-unsaturated D-galactopyranosyluronic acid at the non-reducing end.. Pectinolytic enzymes consist of four classes of enzymes: pectin lyase, polygalacturonase, pectin methylesterase and rhamnogalacturonase. Degrades the rhamnogalacturonan I (RG-I) backbone of pectin. The sequence is that of Probable rhamnogalacturonate lyase B (rglB) from Aspergillus oryzae (strain ATCC 42149 / RIB 40) (Yellow koji mold).